Reading from the N-terminus, the 151-residue chain is Aspartate carbamoyltransferase regulatory chain (151 aa).

Positions 108, 113, 138, and 141 each coordinate Zn(2+).

It belongs to the PyrI family. Contains catalytic and regulatory chains. It depends on Zn(2+) as a cofactor.

Involved in allosteric regulation of aspartate carbamoyltransferase. In Pyrobaculum neutrophilum (strain DSM 2338 / JCM 9278 / NBRC 100436 / V24Sta) (Thermoproteus neutrophilus), this protein is Aspartate carbamoyltransferase regulatory chain.